Reading from the N-terminus, the 132-residue chain is Small ribosomal subunit protein uS11 (132 aa).

The protein belongs to the universal ribosomal protein uS11 family. Part of the 30S ribosomal subunit. Interacts with proteins S7 and S18. Binds to IF-3.

In terms of biological role, located on the platform of the 30S subunit, it bridges several disparate RNA helices of the 16S rRNA. Forms part of the Shine-Dalgarno cleft in the 70S ribosome. This is Small ribosomal subunit protein uS11 from Clostridium botulinum (strain 657 / Type Ba4).